Reading from the N-terminus, the 165-residue chain is Large ribosomal subunit protein uL10 (165 aa).

This sequence belongs to the universal ribosomal protein uL10 family. Part of the ribosomal stalk of the 50S ribosomal subunit. The N-terminus interacts with L11 and the large rRNA to form the base of the stalk. The C-terminus forms an elongated spine to which L12 dimers bind in a sequential fashion forming a multimeric L10(L12)X complex.

Its function is as follows. Forms part of the ribosomal stalk, playing a central role in the interaction of the ribosome with GTP-bound translation factors. This chain is Large ribosomal subunit protein uL10, found in Shewanella piezotolerans (strain WP3 / JCM 13877).